We begin with the raw amino-acid sequence, 509 residues long: Tyrosine-protein kinase STK (509 aa).

Residues 1 to 16 are compositionally biased toward polar residues; that stretch reads MGPCCSKQTKALNNQP. Residues 1–23 are disordered; the sequence is MGPCCSKQTKALNNQPDKSKSKD. The N-myristoyl glycine moiety is linked to residue Gly-2. An SH3 domain is found at 59 to 120; the sequence is PGVTIFVALY…PSTYVAPEKS (62 aa). Residues 126–218 form the SH2 domain; that stretch reads WYFGDVKRAE…GLVCALTLPC (93 aa). A Protein kinase domain is found at 240–495; it reads LRLNRKLGAG…LQGVLEDYFV (256 aa). Residues 246–254 and Lys-268 contribute to the ATP site; that span reads LGAGQFGEV. The Proton acceptor role is filled by Asp-360. Tyr-390 is subject to Phosphotyrosine; by autocatalysis.

Belongs to the protein kinase superfamily. Tyr protein kinase family. SRC subfamily.

It catalyses the reaction L-tyrosyl-[protein] + ATP = O-phospho-L-tyrosyl-[protein] + ADP + H(+). This is Tyrosine-protein kinase STK (STK) from Hydra vulgaris (Hydra).